We begin with the raw amino-acid sequence, 175 residues long: Large ribosomal subunit protein uL22y (175 aa).

Residues 153–163 are compositionally biased toward basic and acidic residues; the sequence is EKEEPVKKEPE. The interval 153–175 is disordered; it reads EKEEPVKKEPETQLAAKSKKSAA.

This sequence belongs to the universal ribosomal protein uL22 family.

The protein is Large ribosomal subunit protein uL22y (RPL17B) of Arabidopsis thaliana (Mouse-ear cress).